The chain runs to 362 residues: Peptide chain release factor 1 (362 aa).

The residue at position 232 (glutamine 232) is an N5-methylglutamine.

The protein belongs to the prokaryotic/mitochondrial release factor family. Post-translationally, methylated by PrmC. Methylation increases the termination efficiency of RF1.

The protein localises to the cytoplasm. Its function is as follows. Peptide chain release factor 1 directs the termination of translation in response to the peptide chain termination codons UAG and UAA. The sequence is that of Peptide chain release factor 1 from Myxococcus xanthus.